The following is a 951-amino-acid chain: Leucine-rich repeat-containing G-protein coupled receptor 4 (951 aa).

A signal peptide spans 1–24; sequence MPGPLRLLCFFALGLLGSAGPSGA. The LRRNT domain occupies 25 to 57; that stretch reads APPLCAAPCSCDGDRRVDCSGKGLTAVPEGLSA. At 25 to 544 the chain is on the extracellular side; it reads APPLCAAPCS…LLGSWMIRLT (520 aa). 2 cysteine pairs are disulfide-bonded: C29/C35 and C33/C43. 15 LRR repeats span residues 58–79, 82–103, 106–127, 130–151, 154–177, 178–199, 202–223, 226–247, 249–270, 273–294, 320–341, 344–365, 366–387, 390–411, and 414–435; these read FTQA…AFKN, FLEE…ALSG, ELKV…AIRG, ALQS…SFEG, QLRH…SNLP, TLQA…AFTN, SLVV…CFDG, NLET…IKAL, SLKE…AFAG, LLRT…AFHN, HLES…LCQN, MLRT…NGCR, ALEE…TFQG, SLRI…AFAK, and TITN…GLNG. The N-linked (GlcNAc...) asparagine glycan is linked to N68. Residues N188 and N199 are each glycosylated (N-linked (GlcNAc...) asparagine). N294 is a glycosylation site (N-linked (GlcNAc...) asparagine). Residues C339 and C364 are joined by a disulfide bond. Disulfide bonds link C470–C522 and C471–C476. The interval 487–512 is disordered; the sequence is NSPQDHSVTKEKGATDAANATSTAES. Residues 501–510 show a composition bias toward low complexity; that stretch reads TDAANATSTA. N505 carries N-linked (GlcNAc...) asparagine glycosylation. Residues 545–565 form a helical membrane-spanning segment; sequence VWFIFLVALLFNLLVILTVFA. Topologically, residues 566–575 are cytoplasmic; the sequence is SCSSLPASKL. A helical transmembrane segment spans residues 576-596; sequence FIGLISVSNLLMGIYTGILTF. Residues 597 to 619 are Extracellular-facing; that stretch reads LDAVSWGRFAEFGIWWETGSGCK. C618 and C693 are disulfide-bonded. Residues 620 to 640 form a helical membrane-spanning segment; sequence VAGSLAVFSSESAVFLLTLAA. Residues 641–661 lie on the Cytoplasmic side of the membrane; it reads VERSVFAKDVMKNGKSSHLRQ. A helical membrane pass occupies residues 662-682; that stretch reads FQVAALVALLGAAIAGCFPLF. Topologically, residues 683-703 are extracellular; the sequence is HGGQYSASPLCLPFPTGETPS. The helical transmembrane segment at 704–724 threads the bilayer; it reads LGFTVTLVLLNSLAFLLMAII. Topologically, residues 725–756 are cytoplasmic; that stretch reads YTKLYCNLEKEDPSENSQSSMIKHVAWLIFTN. The chain crosses the membrane as a helical span at residues 757–777; the sequence is CIFFCPVAFFSFAPLITAISI. Residues 778–783 are Extracellular-facing; it reads SPEIMK. The chain crosses the membrane as a helical span at residues 784 to 804; the sequence is SVTLIFFPLPACLNPVLYVFF. Residues 805–951 lie on the Cytoplasmic side of the membrane; it reads NPKFKDDWKL…YAYNLPRVRD (147 aa). S920 bears the Phosphoserine mark.

It belongs to the G-protein coupled receptor 1 family.

The protein localises to the cell membrane. Receptor for R-spondins that potentiates the canonical Wnt signaling pathway and is involved in the formation of various organs. Upon binding to R-spondins (RSPO1, RSPO2, RSPO3 or RSPO4), associates with phosphorylated LRP6 and frizzled receptors that are activated by extracellular Wnt receptors, triggering the canonical Wnt signaling pathway to increase expression of target genes. In contrast to classical G-protein coupled receptors, does not activate heterotrimeric G-proteins to transduce the signal. Its function as activator of the Wnt signaling pathway is required for the development of various organs, including liver, kidney, intestine, bone, reproductive tract and eye. May also act as a receptor for norrin (NDP), such results however require additional confirmation in vivo. Required during spermatogenesis to activate the Wnt signaling pathway in peritubular myoid cells. Required for the maintenance of intestinal stem cells and Paneth cell differentiation in postnatal intestinal crypts. Acts as a regulator of bone formation and remodeling. Involved in kidney development; required for maintaining the ureteric bud in an undifferentiated state. Involved in the development of the anterior segment of the eye. Required during erythropoiesis. Also acts as a negative regulator of innate immunity by inhibiting TLR2/TLR4 associated pattern-recognition and pro-inflammatory cytokine production. Plays an important role in regulating the circadian rhythms of plasma lipids, partially through regulating the rhythmic expression of MTTP. Required for proper development of GnRH neurons (gonadotropin-releasing hormone expressing neurons) that control the release of reproductive hormones from the pituitary gland. The sequence is that of Leucine-rich repeat-containing G-protein coupled receptor 4 (Lgr4) from Mus musculus (Mouse).